A 357-amino-acid chain; its full sequence is Uroporphyrinogen decarboxylase (357 aa).

Substrate is bound by residues 27-31 (RQAGR), D77, Y154, T209, and H327.

This sequence belongs to the uroporphyrinogen decarboxylase family. In terms of assembly, homodimer.

The protein resides in the cytoplasm. The enzyme catalyses uroporphyrinogen III + 4 H(+) = coproporphyrinogen III + 4 CO2. Its pathway is porphyrin-containing compound metabolism; protoporphyrin-IX biosynthesis; coproporphyrinogen-III from 5-aminolevulinate: step 4/4. Its function is as follows. Catalyzes the decarboxylation of four acetate groups of uroporphyrinogen-III to yield coproporphyrinogen-III. The polypeptide is Uroporphyrinogen decarboxylase (Nitrosococcus oceani (strain ATCC 19707 / BCRC 17464 / JCM 30415 / NCIMB 11848 / C-107)).